The sequence spans 58 residues: Small ribosomal subunit protein bS21 (58 aa).

Belongs to the bacterial ribosomal protein bS21 family.

The protein is Small ribosomal subunit protein bS21 of Staphylococcus aureus (strain bovine RF122 / ET3-1).